Here is a 437-residue protein sequence, read N- to C-terminus: ATP-dependent protease ATPase subunit HslU (437 aa).

ATP-binding positions include Val18, Gly60–Glu65, Asp250, Glu315, and Arg387.

The protein belongs to the ClpX chaperone family. HslU subfamily. As to quaternary structure, a double ring-shaped homohexamer of HslV is capped on each side by a ring-shaped HslU homohexamer. The assembly of the HslU/HslV complex is dependent on binding of ATP.

Its subcellular location is the cytoplasm. Functionally, ATPase subunit of a proteasome-like degradation complex; this subunit has chaperone activity. The binding of ATP and its subsequent hydrolysis by HslU are essential for unfolding of protein substrates subsequently hydrolyzed by HslV. HslU recognizes the N-terminal part of its protein substrates and unfolds these before they are guided to HslV for hydrolysis. In Desulfovibrio desulfuricans (strain ATCC 27774 / DSM 6949 / MB), this protein is ATP-dependent protease ATPase subunit HslU.